A 157-amino-acid polypeptide reads, in one-letter code: Transcriptional regulator MraZ (157 aa).

2 consecutive SpoVT-AbrB domains span residues 7–52 (TYTM…AGGN) and 83–126 (SETL…EPER).

Belongs to the MraZ family. As to quaternary structure, forms oligomers.

The protein localises to the cytoplasm. It localises to the nucleoid. The sequence is that of Transcriptional regulator MraZ from Xanthobacter autotrophicus (strain ATCC BAA-1158 / Py2).